Reading from the N-terminus, the 729-residue chain is Catalase-peroxidase (729 aa).

A cross-link (tryptophyl-tyrosyl-methioninium (Trp-Tyr) (with M-243)) is located at residues 95–217 (WHSAGTYRIT…LAAVQMGLIY (123 aa)). The Proton acceptor role is filled by His-96. Residues 217-243 (YVNPEGPNGKPDPIAAATDIRETFFRM) constitute a cross-link (tryptophyl-tyrosyl-methioninium (Tyr-Met) (with W-95)). Residue His-258 coordinates heme b.

The protein belongs to the peroxidase family. Peroxidase/catalase subfamily. As to quaternary structure, homodimer or homotetramer. It depends on heme b as a cofactor. Formation of the three residue Trp-Tyr-Met cross-link is important for the catalase, but not the peroxidase activity of the enzyme.

It carries out the reaction H2O2 + AH2 = A + 2 H2O. The enzyme catalyses 2 H2O2 = O2 + 2 H2O. Functionally, bifunctional enzyme with both catalase and broad-spectrum peroxidase activity. In Nitrobacter hamburgensis (strain DSM 10229 / NCIMB 13809 / X14), this protein is Catalase-peroxidase.